The chain runs to 290 residues: 4-hydroxy-tetrahydrodipicolinate synthase (290 aa).

Thr-44 contacts pyruvate. Residue Tyr-132 is the Proton donor/acceptor of the active site. The Schiff-base intermediate with substrate role is filled by Lys-160. Position 202 (Ile-202) interacts with pyruvate.

It belongs to the DapA family. As to quaternary structure, homotetramer; dimer of dimers.

Its subcellular location is the cytoplasm. The enzyme catalyses L-aspartate 4-semialdehyde + pyruvate = (2S,4S)-4-hydroxy-2,3,4,5-tetrahydrodipicolinate + H2O + H(+). Its pathway is amino-acid biosynthesis; L-lysine biosynthesis via DAP pathway; (S)-tetrahydrodipicolinate from L-aspartate: step 3/4. In terms of biological role, catalyzes the condensation of (S)-aspartate-beta-semialdehyde [(S)-ASA] and pyruvate to 4-hydroxy-tetrahydrodipicolinate (HTPA). In Ruegeria pomeroyi (strain ATCC 700808 / DSM 15171 / DSS-3) (Silicibacter pomeroyi), this protein is 4-hydroxy-tetrahydrodipicolinate synthase.